A 167-amino-acid chain; its full sequence is SsrA-binding protein (167 aa).

Over residues 139 to 158 (QNHDKRDAAKERDWQRDKQR) the composition is skewed to basic and acidic residues. Positions 139–167 (QNHDKRDAAKERDWQRDKQRVMRRHNRDA) are disordered.

Belongs to the SmpB family.

It is found in the cytoplasm. Functionally, required for rescue of stalled ribosomes mediated by trans-translation. Binds to transfer-messenger RNA (tmRNA), required for stable association of tmRNA with ribosomes. tmRNA and SmpB together mimic tRNA shape, replacing the anticodon stem-loop with SmpB. tmRNA is encoded by the ssrA gene; the 2 termini fold to resemble tRNA(Ala) and it encodes a 'tag peptide', a short internal open reading frame. During trans-translation Ala-aminoacylated tmRNA acts like a tRNA, entering the A-site of stalled ribosomes, displacing the stalled mRNA. The ribosome then switches to translate the ORF on the tmRNA; the nascent peptide is terminated with the 'tag peptide' encoded by the tmRNA and targeted for degradation. The ribosome is freed to recommence translation, which seems to be the essential function of trans-translation. The protein is SsrA-binding protein of Xanthomonas oryzae pv. oryzae (strain MAFF 311018).